Consider the following 359-residue polypeptide: Protein FAM50 homolog (359 aa).

2 disordered regions span residues 122 to 150 and 339 to 359; these read NLDD…EDQP and PYDP…KSKK. The segment covering 123–136 has biased composition (acidic residues); that stretch reads LDDDEEEEEEDDED. Residues 137–150 are compositionally biased toward basic and acidic residues; it reads HDKKQLKIKQEDQP.

This sequence belongs to the FAM50 family.

The sequence is that of Protein FAM50 homolog from Drosophila melanogaster (Fruit fly).